Reading from the N-terminus, the 328-residue chain is MTHRFPRSRTALAVALMAGFAMSAQARVFRSADVHGDSFPTNMAVKFMGDELSKLTGGKDSIKVFGNSALGSEKDTVDQVRIGAIDMARVNGASFNEIVPESLIPSFPFLFRDVDHFRKAMYGPAGQKILDAFAAKGMIALTFYESGARSIYAKRPVRTPADMKGLKVRVQPSDLMVDEIRAMGGTPTPMPFAEVYTGLKTGLVDAAENNLPSYEETKHFEVAPDYSETQHAMTPEVLVFSKKIWDTLSPQEQAAIRKAAADSVPYYQKLWTAREASAQQAVTKGGANILPAAQVDRAAFVKAMQPLWTKYEKTPQMKQIVDEIEATK.

The N-terminal stretch at 1–26 is a signal peptide; that stretch reads MTHRFPRSRTALAVALMAGFAMSAQA. Residues histidine 35, glutamate 73, arginine 89, arginine 149, asparagine 209, and glutamate 236 each contribute to the beta-D-galacturonate site. Beta-D-glucuronate contacts are provided by histidine 35, glutamate 73, arginine 89, arginine 149, asparagine 209, and glutamate 236.

The protein belongs to the bacterial solute-binding protein 7 family. The complex is comprised of an extracytoplasmic solute-binding protein and a heteromeric permease formed by two transmembrane proteins.

It is found in the periplasm. In terms of biological role, solute-binding protein that binds D-galacturonate and D-glucuronate (in vitro). Probably part of a tripartite ATP-independent periplasmic (TRAP) transport system that mediates solute transport into the cytoplasm. This is Solute-binding protein Bamb_6123 from Burkholderia ambifaria (strain ATCC BAA-244 / DSM 16087 / CCUG 44356 / LMG 19182 / AMMD) (Burkholderia cepacia (strain AMMD)).